Reading from the N-terminus, the 343-residue chain is Transmembrane protein 120A (343 aa).

The Cytoplasmic portion of the chain corresponds to 1–132 (MQPPPPGPLG…KQAKFAYKDE (132 aa)). A CoA-binding site is contributed by lysine 130. A helical membrane pass occupies residues 133 to 152 (YEKFKLYLTIILILISFTCR). The Extracellular segment spans residues 153–158 (FLLNSR). The chain crosses the membrane as a helical span at residues 159–177 (VTDAAFNFLLVWYYCTLTI). The Cytoplasmic segment spans residues 178-190 (RESILINNGSRIK). CoA is bound by residues serine 187 and arginine 188. The helical transmembrane segment at 191 to 209 (GWWVFHHYVSTFLSGVMLT) threads the bilayer. The Extracellular segment spans residues 210–218 (WPDGLMYQK). Residues 219–240 (FRNQFLSFSMYQSFVQFLQYYY) traverse the membrane as a helical segment. Residues glutamine 237, tyrosine 240, glutamine 241, and histidine 283 each contribute to the CoA site. Topologically, residues 241–270 (QSGCLYRLRALGERHTMDLTVEGFQSWMWR) are cytoplasmic. The chain crosses the membrane as a helical span at residues 271–294 (GLTFLLPFLFFGHFWQLFNALTLF). Over 295 to 304 (NLAQDPQCKE) the chain is Extracellular. The helical transmembrane segment at 305–330 (WQVLMCGFPFLLLFLGNFFTTLRVVH) threads the bilayer. The Cytoplasmic portion of the chain corresponds to 331 to 343 (HKFHSQRHGSKKD). Lysine 332 contributes to the CoA binding site.

This sequence belongs to the TMEM120 family. Homodimer. Forms heterooligomer with TMEM120B. Interacts with PKD2; TMEM120A inhibits PKD2 channel activity through the physical association of PKD2 with TMEM120A. Interacts (via C-terminal domain) with STING1; regulates the trafficking of STING1 from the ER to the ER-Golgi intermediate compartment to elicit antiviral effects. In terms of tissue distribution, expressed in nociceptors.

The protein resides in the cell membrane. Its subcellular location is the nucleus inner membrane. It is found in the endoplasmic reticulum. Multifunctional protein involved in mechanosensation, and plays an essential role in lipid metabolism and adipocyte differentiation. May function as a potential ion channel involved in sensing mechanical stimuli. Mediates the mechanosensitivity of the PKD2-TMEM120A channel complex through direct physical interaction. TMEM120A seems to affect mechanosensation by inhibiting PIEZO2 channels, possibly by altering cellular lipid content. TMEM120A is structurally similar to a lipid-modifying enzyme, ELOVL7, and contains a bound coenzyme A molecule, which suggests it might function as an enzyme in lipid metabolism. Additionnaly, implicated in innate immune response against Zika virus. Acts as a key activator of the antiviral signaling involving STING1. The protein is Transmembrane protein 120A of Homo sapiens (Human).